The following is a 1213-amino-acid chain: A disintegrin and metalloproteinase with thrombospondin motifs 19 (1213 aa).

An N-terminal signal peptide occupies residues 1-27 (MGKNREMRLTHICCCCLLYQLGFLSNG). Residues 28 to 322 (IVSELQFAPD…KIAESGRGKR (295 aa)) constitute a propeptide that is removed on maturation. 2 disordered regions span residues 49 to 161 (WRRE…PPPA) and 192 to 215 (FLAP…AASA). The span at 52-71 (EPVDPAGGSGGSADPGWVRG) shows a compositional bias: gly residues. Over residues 110–119 (RPPPPSEGEE) the composition is skewed to acidic residues. Positions 120–139 (DEELESQELPRGSSGAAALS) are enriched in low complexity. Pro residues predominate over residues 140 to 155 (PGAPASWQPPPPPQPP). Asparagine 266 carries N-linked (GlcNAc...) asparagine glycosylation. Residues 298–305 (HYCGIISD) carry the Cysteine switch motif. Residue cysteine 300 coordinates Zn(2+). Residues 331 to 551 (YNIETVVVAD…KASNCLLQTN (221 aa)) form the Peptidase M12B domain. Cystine bridges form between cysteine 407-cysteine 472, cysteine 447-cysteine 454, cysteine 466-cysteine 546, cysteine 505-cysteine 530, cysteine 575-cysteine 599, cysteine 586-cysteine 607, cysteine 594-cysteine 626, cysteine 620-cysteine 631, cysteine 651-cysteine 686, cysteine 655-cysteine 691, and cysteine 666-cysteine 676. Histidine 488 contacts Zn(2+). Glutamate 489 is a catalytic residue. Histidine 492 and histidine 498 together coordinate Zn(2+). Residues 552–639 (PQSVNSVMVP…ECTSRTSAPE (88 aa)) form the Disintegrin domain. The 53-residue stretch at 640–692 (HLAGEWSLWSPCSRTCSAGISSRERKCPGLDSEARDCNGPRKQYRICENPPCP) folds into the TSP type-1 1 domain. The segment at 797–920 (IIKGDFNHTR…PENQSSKAPE (124 aa)) is spacer. 4 N-linked (GlcNAc...) asparagine glycosylation sites follow: asparagine 803, asparagine 913, asparagine 955, and asparagine 1015. 4 TSP type-1 domains span residues 921–981 (PLFM…NEQP), 982–1043 (CQTR…QDCM), 1045–1089 (VWEA…EDCE), and 1093–1150 (KCYV…QPCN). 3 disulfides stabilise this stretch: cysteine 994–cysteine 1037, cysteine 998–cysteine 1042, and cysteine 1009–cysteine 1026. The PLAC domain occupies 1166–1205 (LTFKCLGDQWPVYCRVIREKNLCQDMRWYQRCCETCRDFY).

Zn(2+) serves as cofactor. In terms of processing, the precursor is cleaved by a furin endopeptidase. Post-translationally, glycosylated. Can be O-fucosylated by POFUT2 on a serine or a threonine residue found within the consensus sequence C1-X(2)-(S/T)-C2-G of the TSP type-1 repeat domains where C1 and C2 are the first and second cysteine residue of the repeat, respectively. Fucosylated repeats can then be further glycosylated by the addition of a beta-1,3-glucose residue by the glucosyltransferase, B3GALTL. Fucosylation mediates the efficient secretion of ADAMTS family members. Can also be C-glycosylated with one or two mannose molecules on tryptophan residues within the consensus sequence W-X-X-W of the TPRs, and N-glycosylated. These other glycosylations can also facilitate secretion. In terms of tissue distribution, expressed in fetal lung, but not in any adult tissues examined. Expression was detected in an osteosarcoma cDNA library.

It is found in the secreted. It localises to the extracellular space. Its subcellular location is the extracellular matrix. This chain is A disintegrin and metalloproteinase with thrombospondin motifs 19 (ADAMTS19), found in Homo sapiens (Human).